The primary structure comprises 1084 residues: Carbamoyl phosphate synthase large chain (1084 aa).

The interval 1–401 (MPRRQDVEKV…ALLKAVRSLE (401 aa)) is carboxyphosphate synthetic domain. ATP-binding residues include R129, R169, G175, G176, R208, L210, E215, G241, V242, H243, Q284, and E298. The ATP-grasp 1 domain occupies 133 to 327 (RALMKEIGEP…IAKVAAKIAV (195 aa)). Positions 284, 298, and 300 each coordinate Mg(2+). Q284, E298, and N300 together coordinate Mn(2+). The tract at residues 402–546 (TGRDGLFHPA…YSCYDEENEA (145 aa)) is oligomerization domain. The carbamoyl phosphate synthetic domain stretch occupies residues 547-947 (VSPPGRKAVV…ALYKALLASG (401 aa)). In terms of domain architecture, ATP-grasp 2 spans 672–862 (DQLLSDLSIP…LAKVATQVIA (191 aa)). Positions 708, 747, 753, 778, 779, 780, 781, 821, and 833 each coordinate ATP. The Mg(2+) site is built by Q821, E833, and N835. Mn(2+) is bound by residues Q821, E833, and N835. Residues 948–1084 (VRVPHRGTVL…VGISAVQDWV (137 aa)) enclose the MGS-like domain. The tract at residues 948-1084 (VRVPHRGTVL…VGISAVQDWV (137 aa)) is allosteric domain.

It belongs to the CarB family. As to quaternary structure, composed of two chains; the small (or glutamine) chain promotes the hydrolysis of glutamine to ammonia, which is used by the large (or ammonia) chain to synthesize carbamoyl phosphate. Tetramer of heterodimers (alpha,beta)4. It depends on Mg(2+) as a cofactor. The cofactor is Mn(2+).

The enzyme catalyses hydrogencarbonate + L-glutamine + 2 ATP + H2O = carbamoyl phosphate + L-glutamate + 2 ADP + phosphate + 2 H(+). It carries out the reaction hydrogencarbonate + NH4(+) + 2 ATP = carbamoyl phosphate + 2 ADP + phosphate + 2 H(+). It participates in amino-acid biosynthesis; L-arginine biosynthesis; carbamoyl phosphate from bicarbonate: step 1/1. It functions in the pathway pyrimidine metabolism; UMP biosynthesis via de novo pathway; (S)-dihydroorotate from bicarbonate: step 1/3. In terms of biological role, large subunit of the glutamine-dependent carbamoyl phosphate synthetase (CPSase). CPSase catalyzes the formation of carbamoyl phosphate from the ammonia moiety of glutamine, carbonate, and phosphate donated by ATP, constituting the first step of 2 biosynthetic pathways, one leading to arginine and/or urea and the other to pyrimidine nucleotides. The large subunit (synthetase) binds the substrates ammonia (free or transferred from glutamine from the small subunit), hydrogencarbonate and ATP and carries out an ATP-coupled ligase reaction, activating hydrogencarbonate by forming carboxy phosphate which reacts with ammonia to form carbamoyl phosphate. In Symbiobacterium thermophilum (strain DSM 24528 / JCM 14929 / IAM 14863 / T), this protein is Carbamoyl phosphate synthase large chain.